The primary structure comprises 285 residues: Stress response regulator protein 1 (285 aa).

Composition is skewed to low complexity over residues Asp43–Asn58 and Ser128–Ser138. Disordered stretches follow at residues Asp43–Gln66 and Pro114–Val142. A Response regulatory domain is found at Ser158–Asp276. 4-aspartylphosphate is present on Asp209.

Its function is as follows. Required for stress adaptation, morphogenesis and virulence. This Candida dubliniensis (strain CD36 / ATCC MYA-646 / CBS 7987 / NCPF 3949 / NRRL Y-17841) (Yeast) protein is Stress response regulator protein 1 (SRR1).